Reading from the N-terminus, the 383-residue chain is Acetylornithine deacetylase (383 aa).

His-80 contributes to the Zn(2+) binding site. Residue Asp-82 is part of the active site. Asp-112 contributes to the Zn(2+) binding site. Glu-144 is a catalytic residue. Zn(2+)-binding residues include Glu-145, Glu-169, and His-355.

It belongs to the peptidase M20A family. ArgE subfamily. As to quaternary structure, homodimer. Zn(2+) serves as cofactor. It depends on Co(2+) as a cofactor. Requires glutathione as cofactor.

It localises to the cytoplasm. The catalysed reaction is N(2)-acetyl-L-ornithine + H2O = L-ornithine + acetate. The protein operates within amino-acid biosynthesis; L-arginine biosynthesis; L-ornithine from N(2)-acetyl-L-ornithine (linear): step 1/1. In terms of biological role, catalyzes the hydrolysis of the amide bond of N(2)-acetylated L-amino acids. Cleaves the acetyl group from N-acetyl-L-ornithine to form L-ornithine, an intermediate in L-arginine biosynthesis pathway, and a branchpoint in the synthesis of polyamines. In Escherichia coli (strain K12 / MC4100 / BW2952), this protein is Acetylornithine deacetylase.